A 704-amino-acid polypeptide reads, in one-letter code: Elongation factor G (704 aa).

The region spanning 8 to 290 (ARYRNIGISA…AVIDYLPSPV (283 aa)) is the tr-type G domain. GTP contacts are provided by residues 17-24 (AHIDAGKT), 88-92 (DTPGH), and 142-145 (NKMD). N6-acetyllysine is present on residues lysine 504 and lysine 643.

Belongs to the TRAFAC class translation factor GTPase superfamily. Classic translation factor GTPase family. EF-G/EF-2 subfamily.

It localises to the cytoplasm. Catalyzes the GTP-dependent ribosomal translocation step during translation elongation. During this step, the ribosome changes from the pre-translocational (PRE) to the post-translocational (POST) state as the newly formed A-site-bound peptidyl-tRNA and P-site-bound deacylated tRNA move to the P and E sites, respectively. Catalyzes the coordinated movement of the two tRNA molecules, the mRNA and conformational changes in the ribosome. The polypeptide is Elongation factor G (Shigella flexneri).